Here is a 362-residue protein sequence, read N- to C-terminus: Peptide chain release factor 1 (362 aa).

Q240 carries the post-translational modification N5-methylglutamine.

It belongs to the prokaryotic/mitochondrial release factor family. Post-translationally, methylated by PrmC. Methylation increases the termination efficiency of RF1.

Its subcellular location is the cytoplasm. Functionally, peptide chain release factor 1 directs the termination of translation in response to the peptide chain termination codons UAG and UAA. In Bifidobacterium longum subsp. infantis (strain ATCC 15697 / DSM 20088 / JCM 1222 / NCTC 11817 / S12), this protein is Peptide chain release factor 1.